Consider the following 235-residue polypeptide: Serine protease SplA (235 aa).

A signal peptide spans 1–35 (MNKNVMVKGLTALDILTSLGCAENISDQPHSIAKA). Residues H74, D113, and S189 each act as charge relay system in the active site.

The protein belongs to the peptidase S1B family.

The protein localises to the secreted. This chain is Serine protease SplA (splA), found in Staphylococcus aureus.